Consider the following 136-residue polypeptide: Glycine-rich RNA-binding protein 4, mitochondrial (136 aa).

The transit peptide at 1-33 (MAFCNKLSGILRQGVSQSSNGPVTSMLGSLRYM) directs the protein to the mitochondrion. The region spanning 35 to 113 (SKLFVGGLSW…RQIRVNLATE (79 aa)) is the RRM domain. Position 43 is a phosphoserine (Ser-43). Residues 113–136 (ERSSAPRSSFGGGGGYGGGGGGGY) form a disordered region. Over residues 122-136 (FGGGGGYGGGGGGGY) the composition is skewed to gly residues. Residues 123 to 135 (GGGGGYGGGGGGG) form a glycine-rich (GR) required for cell-to-cell movement region.

It belongs to the GR-RBP family. In terms of assembly, binds to small phloem-mobile single-stranded RNAs (ss-sRNA, e.g. small interfering RNA (siRNA) and microRNA (miRNA)) in the phloeme exudate, including viral-derived sRNA (vsiRNA). In terms of tissue distribution, abundantly expressed in young plants, root tips, and flowers, but weakly in mature leaves and stems, implying highly expression in actively proliferating organs.

Its subcellular location is the mitochondrion. It localises to the secreted. Its function is as follows. Possibly has a role in RNA transcription or processing during stress. Binds sequence non-specifically to RNAs and DNAs. Mediates cell-to-cell trafficking of RNA interference (RNAi) signals (small RNAs (sRNA), e.g. small interfering RNA (siRNA) and microRNA (miRNA)) which regulate growth and development, as well as responses to environmental inputs, including pathogen attack; can compromise zucchini yellow mosaic virus (ZYMV) and tobacco rattle virus (TRV) infections at the early stage. The chain is Glycine-rich RNA-binding protein 4, mitochondrial from Arabidopsis thaliana (Mouse-ear cress).